A 234-amino-acid chain; its full sequence is Sugar fermentation stimulation protein A (234 aa).

Residues 201–220 constitute a DNA-binding region (H-T-H motif); the sequence is LLSEAQNKGVEVLAYKAELS.

This sequence belongs to the SfsA family.

Functionally, binds to DNA non-specifically. Could be a regulatory factor involved in maltose metabolism. This chain is Sugar fermentation stimulation protein A, found in Salmonella dublin (strain CT_02021853).